Consider the following 223-residue polypeptide: Golgi to ER traffic protein 1 (223 aa).

A topological domain (lumenal) is located at residue Met-1. Residues 2–21 (SWVVAIAVVFVVVLKVLEYS) form a helical membrane-spanning segment. At 22-105 (TSYHDLVLQS…QIKGHLKKVK (84 aa)) the chain is on the cytoplasmic side. The stretch at 56–105 (ENKSISAQDNYAKWTKNNRKLDKLDKEITELGAQLKAHNEQIKGHLKKVK) forms a coiled coil. Residues 106-126 (LLLLTVPFLCFKLWKGKHIVY) form a helical membrane-spanning segment. Topologically, residues 127-177 (NLPHHQMFPQLVAGVWSQGWLYLAILPLQLAKSIVTGSSFAIETASFPHMG) are lumenal. The helical transmembrane segment at 178 to 194 (VSLGIWLWALNSVISNI) threads the bilayer. Residues 195 to 223 (EFMTMQLWAKPVSKPSKKLEIVTDEIKVD) are Cytoplasmic-facing.

The protein belongs to the WRB/GET1 family. Component of the Golgi to ER traffic (GET) complex, which is composed of GET1, GET2 and GET3. Within the complex, GET1 and GET2 form a heterotetramer which is stabilized by phosphatidylinositol binding and which binds to the GET3 homodimer.

The protein localises to the endoplasmic reticulum membrane. It is found in the golgi apparatus membrane. In terms of biological role, required for the post-translational delivery of tail-anchored (TA) proteins to the endoplasmic reticulum. Together with GET2, acts as a membrane receptor for soluble GET3, which recognizes and selectively binds the transmembrane domain of TA proteins in the cytosol. The GET complex cooperates with the HDEL receptor ERD2 to mediate the ATP-dependent retrieval of resident ER proteins that contain a C-terminal H-D-E-L retention signal from the Golgi to the ER. The protein is Golgi to ER traffic protein 1 of Candida glabrata (strain ATCC 2001 / BCRC 20586 / JCM 3761 / NBRC 0622 / NRRL Y-65 / CBS 138) (Yeast).